The chain runs to 346 residues: Cyclin-dependent kinase 7 (346 aa).

Residue alanine 2 is modified to N-acetylalanine. Serine 7 bears the Phosphoserine mark. Positions 12 to 295 (YEKLDFLGEG…ATQALKMKYF (284 aa)) constitute a Protein kinase domain. ATP-binding positions include 18 to 26 (LGEGQFATV) and lysine 41. The Proton acceptor role is filled by aspartate 137. Serine 164 bears the Phosphoserine; by CDK1 and CDK2 mark. Threonine 170 carries the post-translational modification Phosphothreonine; by CDK2. Residue serine 321 is modified to Phosphoserine.

It belongs to the protein kinase superfamily. CMGC Ser/Thr protein kinase family. CDC2/CDKX subfamily. Associates primarily with cyclin-H (CCNH) and MAT1 to form the CAK complex. CAK can further associate with the core-TFIIH to form the TFIIH basal transcription factor; this complex is sensitive to UV light. The CAK complex binds to p53/TP53 in response to DNA damage. Interacts with CDK2, SF1/NR5A1, PUF60 and PRKCI. Interacts with HINT1. In terms of processing, phosphorylation of Ser-164 during mitosis inactivates the enzyme. Phosphorylation of Thr-170 is required for activity. Phosphorylated at Ser-164 and Thr-170 by CDK2. Ubiquitous.

Its subcellular location is the nucleus. It localises to the cytoplasm. It is found in the perinuclear region. It catalyses the reaction L-seryl-[protein] + ATP = O-phospho-L-seryl-[protein] + ADP + H(+). The enzyme catalyses L-threonyl-[protein] + ATP = O-phospho-L-threonyl-[protein] + ADP + H(+). It carries out the reaction [DNA-directed RNA polymerase] + ATP = phospho-[DNA-directed RNA polymerase] + ADP + H(+). Its activity is regulated as follows. Inactivated by phosphorylation. Repressed by roscovitine (seliciclib, CYC202), R547 (Ro-4584820) and SNS-032 (BMS-387032). The association of p53/TP53 to the CAK complex in response to DNA damage reduces kinase activity toward CDK2 and RNA polymerase II repetitive C-terminal domain (CTD), thus stopping cell cycle progression. The inactivation by roscovitine promotes caspase-mediated apoptosis in leukemic cells. Specifically inactivated by THZ1. Serine/threonine kinase involved in cell cycle control and in RNA polymerase II-mediated RNA transcription. Cyclin-dependent kinases (CDKs) are activated by the binding to a cyclin and mediate the progression through the cell cycle. Each different complex controls a specific transition between 2 subsequent phases in the cell cycle. Required for both activation and complex formation of CDK1/cyclin-B during G2-M transition, and for activation of CDK2/cyclins during G1-S transition (but not complex formation). CDK7 is the catalytic subunit of the CDK-activating kinase (CAK) complex. Phosphorylates SPT5/SUPT5H, SF1/NR5A1, POLR2A, p53/TP53, CDK1, CDK2, CDK4, CDK6 and CDK11B/CDK11. Initiates transcription by RNA polymerase II by mediating phosphorylation of POLR2A at 'Ser-5' of the repetitive C-terminal domain (CTD) when POLR2A is in complex with DNA, promoting dissociation from DNA and initiation. CAK activates the cyclin-associated kinases CDK1, CDK2, CDK4 and CDK6 by threonine phosphorylation, thus regulating cell cycle progression. CAK complexed to the core-TFIIH basal transcription factor activates RNA polymerase II by serine phosphorylation of the CTD of POLR2A, allowing its escape from the promoter and elongation of the transcripts. Its expression and activity are constant throughout the cell cycle. Upon DNA damage, triggers p53/TP53 activation by phosphorylation, but is inactivated in turn by p53/TP53; this feedback loop may lead to an arrest of the cell cycle and of the transcription, helping in cell recovery, or to apoptosis. Required for DNA-bound peptides-mediated transcription and cellular growth inhibition. In Homo sapiens (Human), this protein is Cyclin-dependent kinase 7 (CDK7).